The following is a 274-amino-acid chain: Kit ligand (274 aa).

The N-terminal stretch at M1–T25 is a signal peptide. Over K26 to Q215 the chain is Extracellular. 2 cysteine pairs are disulfide-bonded: C29-C114 and C68-C164. Residues N90, N97, N145, and N196 are each glycosylated (N-linked (GlcNAc...) asparagine). A helical transmembrane segment spans residues W216 to W238. Residues K239–V274 are Cytoplasmic-facing.

It belongs to the SCF family. In terms of assembly, homodimer, non-covalently linked. In terms of processing, a soluble form is produced by proteolytic processing of isoform 1 in the extracellular domain.

The protein resides in the cell membrane. It is found in the secreted. Its subcellular location is the cytoplasm. It localises to the cytoskeleton. The protein localises to the cell projection. The protein resides in the lamellipodium. It is found in the filopodium. Stimulates the proliferation of mast cells. Able to augment the proliferation of both myeloid and lymphoid hematopoietic progenitors in bone marrow culture. Also mediates cell-cell adhesion. Acts synergistically with other cytokines, probably interleukins. The chain is Kit ligand (KITLG) from Felis catus (Cat).